The sequence spans 1168 residues: Transcription-repair-coupling factor (1168 aa).

The Helicase ATP-binding domain occupies 633–794 (DMQKSRPMDR…MLGVRDLSVI (162 aa)). 646 to 653 (GDVGYGKT) is an ATP binding site. The DEEQ box motif lies at 747–750 (DEEQ). The 162-residue stretch at 808–969 (VLEQNMSFIK…GFKIAMRDLN (162 aa)) folds into the Helicase C-terminal domain.

The protein in the N-terminal section; belongs to the UvrB family. In the C-terminal section; belongs to the helicase family. RecG subfamily.

It is found in the cytoplasm. Functionally, couples transcription and DNA repair by recognizing RNA polymerase (RNAP) stalled at DNA lesions. Mediates ATP-dependent release of RNAP and its truncated transcript from the DNA, and recruitment of nucleotide excision repair machinery to the damaged site. This chain is Transcription-repair-coupling factor, found in Staphylococcus aureus (strain MSSA476).